A 543-amino-acid polypeptide reads, in one-letter code: Excitatory amino acid transporter 1 (543 aa).

At 1–47 (MTKSNGEEPRMGSRMERFQQGVRKRTLLAKKKVQNITKEDVKSYLFR) the chain is on the cytoplasmic side. A helical transmembrane segment spans residues 48 to 68 (NAFVLLTVSAVIVGTILGFAL). Residues 69–86 (RPYKMSYREVKYFSFPGE) lie on the Extracellular side of the membrane. Residues 87–108 (LLMRMLQMLVLPLIISSLVTGM) traverse the membrane as a helical segment. The Cytoplasmic segment spans residues 109–122 (AALDSKASGKMGMR). The helical transmembrane segment at 123 to 145 (AVVYYMTTTIIAVVIGIIIVIII) threads the bilayer. Over 146 to 236 (HPGKGTKENM…IREEMVPVPG (91 aa)) the chain is Extracellular. The helical transmembrane segment at 237-260 (SVNGVNALGLVVFSMCFGFVIGNM) threads the bilayer. The Cytoplasmic portion of the chain corresponds to 261 to 269 (KEQGQALRE). A helical transmembrane segment spans residues 270–297 (FFDSLNEAIMRLVAVIMWYAPLGILFLI). Residues 298–318 (AGKILEMEDMGVIGGQLAMYT) are Extracellular-facing. Residues 319 to 340 (VTVIVGLLIHAVIVLPLLYFLV) traverse the membrane as a helical segment. The Cytoplasmic segment spans residues 341-345 (TRKNP). Positions 346 to 376 (WVFIGGLLQALITALGTSSSSATLPITFKCL) form an intramembrane region, discontinuously helical. 363–365 (SSS) provides a ligand contact to L-aspartate. Over 377 to 385 (EENNGVDKR) the chain is Cytoplasmic. Residues 386-412 (ITRFVLPVGATINMDGTALYEALAAIF) traverse the membrane as a helical segment. Positions 394, 396, and 398 each coordinate Na(+). Threonine 402 serves as a coordination point for L-aspartate. At 413–425 (IAQVNNFDLNFGQ) the chain is on the extracellular side. An intramembrane region (discontinuously helical) is located at residues 426–459 (IITISITATAASIGAAGIPQAGLVTMVIVLTSVG). Residue 443 to 447 (IPQAG) participates in L-aspartate binding. Topologically, residues 460–472 (LPTDDITLIIAVD) are extracellular. A helical membrane pass occupies residues 473–494 (WFLDRLRTTTNVLGDSLGAGIV). Residues aspartate 476 and asparagine 483 each coordinate L-aspartate. Asparagine 483 and aspartate 487 together coordinate Na(+). Topologically, residues 495-543 (EHLSRHELKNRDVEMGNSVIEENEMKKPYQLIAQDNEPEKPVADSETKM) are cytoplasmic. Serine 512 carries the post-translational modification Phosphoserine. A disordered region spans residues 522-543 (PYQLIAQDNEPEKPVADSETKM). A compositionally biased stretch (basic and acidic residues) spans 531–543 (EPEKPVADSETKM).

The protein belongs to the dicarboxylate/amino acid:cation symporter (DAACS) (TC 2.A.23) family. SLC1A3 subfamily. As to quaternary structure, homotrimer. Glycosylated. In terms of tissue distribution, detected in brain and cerebellum. Both isoform GLAST-1 and GLAST-1A are expressed in bone and brain. In brain isoform GLAST-1 is highly enriched in the Purkinje cell layer in cerebellum.

The protein localises to the cell membrane. The catalysed reaction is K(+)(in) + L-glutamate(out) + 3 Na(+)(out) + H(+)(out) = K(+)(out) + L-glutamate(in) + 3 Na(+)(in) + H(+)(in). It carries out the reaction K(+)(in) + L-aspartate(out) + 3 Na(+)(out) + H(+)(out) = K(+)(out) + L-aspartate(in) + 3 Na(+)(in) + H(+)(in). It catalyses the reaction D-aspartate(out) + K(+)(in) + 3 Na(+)(out) + H(+)(out) = D-aspartate(in) + K(+)(out) + 3 Na(+)(in) + H(+)(in). Its function is as follows. Sodium-dependent, high-affinity amino acid transporter that mediates the uptake of L-glutamate and also L-aspartate and D-aspartate. Functions as a symporter that transports one amino acid molecule together with two or three Na(+) ions and one proton, in parallel with the counter-transport of one K(+) ion. Plays a redundant role in the rapid removal of released glutamate from the synaptic cleft, which is essential for terminating the postsynaptic action of glutamate. The protein is Excitatory amino acid transporter 1 (Slc1a3) of Rattus norvegicus (Rat).